The chain runs to 405 residues: MTAAVTSSNIVLETHESGIKPYFEQKIQETELKIRSKTENVRRLEAQRNALNDKVRFIKDELRLLQEPGSYVGEVIKIVSDKKVLVKVQPEGKYIVDVAKDINVKDLKASQRVCLRSDSYMLHKVLENKADPLVSLMMVEKVPDSTYDMVGGLTKQIKEIKEVIELPVKHPELFESLGIAQPKGVILYGPPGTGKTLLARAVAHHTDCKFIRVSGAELVQKYIGEGSRMVRELFVMAREHAPSIIFMDEIDSIGSTRVEGSGGGDSEVQRTMLELLNQLDGFETSKNIKIIMATNRLDILDPALLRPGRIDRKIEFPPPSVAARAEILRIHSRKMNLTRGINLRKVAEKMNGCSGADVKGVCTEAGMYALRERRIHVTQEDFELAVGKVMNKNQETAISVAKLFK.

An N-acetylthreonine modification is found at T2. 189–196 provides a ligand contact to ATP; that stretch reads GPPGTGKT.

This sequence belongs to the AAA ATPase family. In terms of assembly, may form a homodimer or a heterodimer with a related family member. Interacts with OLA1, TMA17, and UBR1. In terms of processing, N-acetylated by NAT1.

The protein resides in the cytoplasm. It is found in the nucleus. Functionally, the 26S proteasome is involved in the ATP-dependent degradation of ubiquitinated proteins. The regulatory (or ATPase) complex confers ATP dependency and substrate specificity to the 26S complex. In Saccharomyces cerevisiae (strain ATCC 204508 / S288c) (Baker's yeast), this protein is 26S proteasome regulatory subunit 8 homolog (RPT6).